The chain runs to 477 residues: Beta-agarase D (477 aa).

The first 20 residues, 1-20 (MKRSILLAIIAFLQFFTSYG), serve as a signal peptide directing secretion. Positions 22–378 (YDWDNVPIPA…WIRVYKPVNA (357 aa)) constitute a GH16 domain. Residues 94 to 104 (MQNHVAVSGGN), 123 to 125 (NNT), glutamate 174, glutamate 179, arginine 206, and glutamate 340 each bind substrate. Glutamate 174 acts as the Nucleophile in catalysis. The Proton donor role is filled by glutamate 179. The span at 382-391 (NSAETTSTVE) shows a compositional bias: low complexity. The tract at residues 382–402 (NSAETTSTVEKPASFEPQGQP) is disordered.

It belongs to the glycosyl hydrolase 16 family.

It is found in the secreted. It carries out the reaction Hydrolysis of (1-&gt;4)-beta-D-galactosidic linkages in agarose, giving the tetramer as the predominant product.. Its function is as follows. Cleaves the beta-1,4-linkages between beta-D-galactose and alpha-L-3,6-anhydro-galactose residues in agarose. Cleaves agarose in a random manner with retention of the anomeric-bond configuration, producing beta-anomers that give rise progressively to alpha-anomers when mutarotation takes place. Requires at least 4 consecutive agarose units and is highly intolerant to modifications. In Zobellia galactanivorans (strain DSM 12802 / CCUG 47099 / CIP 106680 / NCIMB 13871 / Dsij), this protein is Beta-agarase D (agaD).